Here is a 1204-residue protein sequence, read N- to C-terminus: Exportin-5 (1204 aa).

Ala2 carries the post-translational modification N-acetylalanine. The segment at 2–108 (AMDQVNALCE…ANGTLNILEE (107 aa)) is necessary for interaction with Ran. Lys396 carries the N6-acetyllysine modification. Positions 533 to 640 (ELLQMVLNFD…KQLLSNELLL (108 aa)) are necessary for interaction with ILF3. The tract at residues 641–642 (TQ) is pre-miRNA binding. At Ser826 the chain carries Phosphoserine.

It belongs to the exportin family. As to quaternary structure, component of a nuclear export receptor complex composed of XPO5, RAN, dsRNA-binding proteins and dsRNA. Found in a nuclear export complex with XPO5, RAN, EEF1A1, and aminoacylated tRNA. Found in a nuclear export complex with XPO5, RAN, ILF3 and dsRNA. Found in a nuclear export complex with XPO5, RAN and pre-miRNA. Found in a nuclear export complex with XPO5, RAN, ILF3 and minihelix VA1 dsRNA. Found in a nuclear export complex with XPO5, RAN, ILF3, ZNF346 and dsRNA. Interacts with EEF1A1, ILF3, NUP153, NUP214 and ZNF346. Interacts with RAN and cargo proteins in a GTP-dependent manner. Interacts with isoform 5 of ADAR/ADAR1 (via DRBM domains). Interacts with SMAD4; mediates nuclear export of SMAD4. Interacts with RAN (GTP-bound form). In terms of tissue distribution, expressed in heart, brain, placenta, lung, skeletal muscle, kidney and pancreas.

It is found in the nucleus. The protein localises to the cytoplasm. Functionally, mediates the nuclear export of proteins bearing a double-stranded RNA binding domain (dsRBD) and double-stranded RNAs (cargos). XPO5 in the nucleus binds cooperatively to the RNA and to the GTPase Ran in its active GTP-bound form. Proteins containing dsRBDs can associate with this trimeric complex through the RNA. Docking of this complex to the nuclear pore complex (NPC) is mediated through binding to nucleoporins. Upon transit of a nuclear export complex into the cytoplasm, hydrolysis of Ran-GTP to Ran-GDP (induced by RANBP1 and RANGAP1, respectively) cause disassembly of the complex and release of the cargo from the export receptor. XPO5 then returns to the nuclear compartment by diffusion through the nuclear pore complex, to mediate another round of transport. The directionality of nuclear export is thought to be conferred by an asymmetric distribution of the GTP- and GDP-bound forms of Ran between the cytoplasm and nucleus. Overexpression may in some circumstances enhance RNA-mediated gene silencing (RNAi). Mediates nuclear export of isoform 5 of ADAR/ADAR1 in a RanGTP-dependent manner. Its function is as follows. Mediates the nuclear export of micro-RNA precursors, which form short hairpins. Also mediates the nuclear export of synthetic short hairpin RNAs used for RNA interference. In some circumstances can also mediate the nuclear export of deacylated and aminoacylated tRNAs. Specifically recognizes dsRNAs that lack a 5'-overhang in a sequence-independent manner, have only a short 3'-overhang, and that have a double-stranded length of at least 15 base-pairs. Binding is dependent on Ran-GTP. (Microbial infection) Mediates the nuclear export of adenovirus VA1 dsRNA. The polypeptide is Exportin-5 (XPO5) (Homo sapiens (Human)).